The primary structure comprises 120 residues: Putative pterin-4-alpha-carbinolamine dehydratase (120 aa).

The protein belongs to the pterin-4-alpha-carbinolamine dehydratase family.

It catalyses the reaction (4aS,6R)-4a-hydroxy-L-erythro-5,6,7,8-tetrahydrobiopterin = (6R)-L-erythro-6,7-dihydrobiopterin + H2O. The protein is Putative pterin-4-alpha-carbinolamine dehydratase of Saccharomyces cerevisiae (strain ATCC 204508 / S288c) (Baker's yeast).